The following is a 119-amino-acid chain: Large ribosomal subunit protein uL22c (119 aa).

Belongs to the universal ribosomal protein uL22 family. Part of the 50S ribosomal subunit.

The protein resides in the plastid. The protein localises to the chloroplast. This protein binds specifically to 23S rRNA. In terms of biological role, the globular domain of the protein is located near the polypeptide exit tunnel on the outside of the subunit, while an extended beta-hairpin is found that lines the wall of the exit tunnel in the center of the 70S ribosome. This Chlorokybus atmophyticus (Soil alga) protein is Large ribosomal subunit protein uL22c (rpl22).